Consider the following 294-residue polypeptide: MVTGVFAALGFVVKELVFLVSYVKNNAFPQPLSSSEEKKYLELMAKGDEHARNMLIEHNLRLVAHIVKKFENTGEDAEDLISIGTIGLIKGIESYSAGKGTKLATYAARCIENEIVITKGGCIHPSLIRFNIYGVRIHNGNFFHDKVNNCFFIFKSMPPLFVMNNEILMHLRALKKTKKDVSLHDPIGQDKEGNEISLIDVLKSENEDVIDTIQLNMELEKVKQYIDILDDREKEVIVGRFGLDLKKEKTQREIAKELGISRSYVSRIEKRALMKMFHEFYRAEKEKRKKAKGK.

The propeptide occupies 1–20; it reads MVTGVFAALGFVVKELVFLV. The encoded by spoIVCB stretch occupies residues 1 to 156; sequence MVTGVFAALG…VNNCFFIFKS (156 aa). A Polymerase core binding motif is present at residues 79–92; sequence DLISIGTIGLIKGI. The interval 114 to 165 is not present in recombined mature factor; that stretch reads EIVITKGGCIHPSLIRFNIYGVRIHNGNFFHDKVNNCFFIFKSMPPLFVMNN. Residues 157 to 294 are encoded by spoIIIC; the sequence is MPPLFVMNNE…KEKRKKAKGK (138 aa). Positions 251–270 form a DNA-binding region, H-T-H motif; it reads QREIAKELGISRSYVSRIEK.

It belongs to the sigma-70 factor family.

Sigma factors are initiation factors that promote the attachment of RNA polymerase to specific initiation sites and are then released. This sigma factor is responsible for the expression of sporulation specific genes in the mother cell. This is RNA polymerase sigma-K factor (sigK) from Bacillus subtilis (strain 168).